Here is a 72-residue protein sequence, read N- to C-terminus: Translation initiation factor IF-1 (72 aa).

Positions 1 to 72 (MSKEDSFEME…SKGRITYRAR (72 aa)) constitute an S1-like domain.

It belongs to the IF-1 family. In terms of assembly, component of the 30S ribosomal translation pre-initiation complex which assembles on the 30S ribosome in the order IF-2 and IF-3, IF-1 and N-formylmethionyl-tRNA(fMet); mRNA recruitment can occur at any time during PIC assembly.

It localises to the cytoplasm. In terms of biological role, one of the essential components for the initiation of protein synthesis. Stabilizes the binding of IF-2 and IF-3 on the 30S subunit to which N-formylmethionyl-tRNA(fMet) subsequently binds. Helps modulate mRNA selection, yielding the 30S pre-initiation complex (PIC). Upon addition of the 50S ribosomal subunit IF-1, IF-2 and IF-3 are released leaving the mature 70S translation initiation complex. The polypeptide is Translation initiation factor IF-1 (Pseudomonas savastanoi pv. phaseolicola (strain 1448A / Race 6) (Pseudomonas syringae pv. phaseolicola (strain 1448A / Race 6))).